We begin with the raw amino-acid sequence, 236 residues long: Cyclin-P3-1 (236 aa).

It belongs to the cyclin family. Cyclin U/P subfamily.

The sequence is that of Cyclin-P3-1 (CYCP3-1) from Oryza sativa subsp. japonica (Rice).